The following is a 180-amino-acid chain: 3-hydroxyanthranilate 3,4-dioxygenase (180 aa).

Arg46 contacts O2. Fe cation contacts are provided by His50, Glu56, and His94. Glu56 is a substrate binding site. 2 residues coordinate substrate: Arg98 and Glu109. Fe cation is bound by residues Cys124, Cys127, Cys161, and Cys164.

This sequence belongs to the 3-HAO family. As to quaternary structure, homodimer. The cofactor is Fe(2+).

It catalyses the reaction 3-hydroxyanthranilate + O2 = (2Z,4Z)-2-amino-3-carboxymuconate 6-semialdehyde. It functions in the pathway cofactor biosynthesis; NAD(+) biosynthesis; quinolinate from L-kynurenine: step 3/3. Catalyzes the oxidative ring opening of 3-hydroxyanthranilate to 2-amino-3-carboxymuconate semialdehyde, which spontaneously cyclizes to quinolinate. This chain is 3-hydroxyanthranilate 3,4-dioxygenase, found in Ruegeria pomeroyi (strain ATCC 700808 / DSM 15171 / DSS-3) (Silicibacter pomeroyi).